The sequence spans 299 residues: MDGIIPINKERGMTSHDVVAKVRGILRTKKVGHSGTLDPSVDGVLPICVGRATKVVDYLMGFGKVYQGSITLGFSTTTEDLDGEVVETKKLDEPLTDEQINQTLTAMTGTLIQIPPMYSAVKVKGRKLYEYARAGETVERPQRQIKVYDFVQTRPSIFDAEKGQQTIYFKVSCGKGTYVRTLAVDFGRHFGLPAVMSDLSRLASGGFKIEECLTLSDLEQARDEDRLSTVIQPLDRALDNFNTITISDVEWEIVKNGGFLNRPQTDEIIALKYNGNIQALYQYDTNRQNYIPKKMLLVR.

Aspartate 38 (nucleophile) is an active-site residue.

The protein belongs to the pseudouridine synthase TruB family. Type 1 subfamily.

The catalysed reaction is uridine(55) in tRNA = pseudouridine(55) in tRNA. Its function is as follows. Responsible for synthesis of pseudouridine from uracil-55 in the psi GC loop of transfer RNAs. The polypeptide is tRNA pseudouridine synthase B (Pediococcus pentosaceus (strain ATCC 25745 / CCUG 21536 / LMG 10740 / 183-1w)).